A 96-amino-acid polypeptide reads, in one-letter code: Prokineticin Bo8 (96 aa).

The first 19 residues, 1-19 (MKCFAQIVVLLLVIAFSHG), serve as a signal peptide directing secretion. Cystine bridges form between Cys-26–Cys-38, Cys-32–Cys-50, Cys-37–Cys-78, Cys-60–Cys-86, and Cys-80–Cys-95.

As to expression, expressed by the skin glands.

It localises to the secreted. Potent agonist for both PKR1/PROKR1 and PKR2/PROKR2, and inducer of a potent and long-lasting hyperalgesia. Also potentiates capsaicin-induced TRPV1 current, when tested on DRG neurons. At subnanomolar concentrations, this protein both induces potent chemotaxis of macrophages and stimulates LPS-induced production of the pro-inflammatory cytokines IL-1 and IL-12. In vivo, potently stimulates the contraction of the guinea-pig gastrointestinal (GI) smooth muscle (nanomolar concentration). The protein is Prokineticin Bo8 of Bombina orientalis (Oriental fire-bellied toad).